Here is an 89-residue protein sequence, read N- to C-terminus: Small ribosomal subunit protein uS15 (89 aa).

Belongs to the universal ribosomal protein uS15 family. Part of the 30S ribosomal subunit. Forms a bridge to the 50S subunit in the 70S ribosome, contacting the 23S rRNA.

Functionally, one of the primary rRNA binding proteins, it binds directly to 16S rRNA where it helps nucleate assembly of the platform of the 30S subunit by binding and bridging several RNA helices of the 16S rRNA. Its function is as follows. Forms an intersubunit bridge (bridge B4) with the 23S rRNA of the 50S subunit in the ribosome. The sequence is that of Small ribosomal subunit protein uS15 from Paramagnetospirillum magneticum (strain ATCC 700264 / AMB-1) (Magnetospirillum magneticum).